The chain runs to 212 residues: F420-dependent NADP reductase (212 aa).

NADP(+)-binding positions include Thr9–Leu12, Ser31–Arg32, Lys36, Ile72, His76, Val98, and Ala137. Coenzyme F420-(gamma-Glu)n is bound at residue Leu207.

Belongs to the F420-dependent NADP reductase family. As to quaternary structure, homodimer.

The enzyme catalyses reduced coenzyme F420-(gamma-L-Glu)(n) + NADP(+) = oxidized coenzyme F420-(gamma-L-Glu)(n) + NADPH + 2 H(+). Functionally, catalyzes the reversible reduction of NADP(+) by F420H(2). In this reaction the proS hydrogen at C5 of F420 is transferred into the proS position at C4 of NADPH. This Archaeoglobus fulgidus (strain ATCC 49558 / DSM 4304 / JCM 9628 / NBRC 100126 / VC-16) protein is F420-dependent NADP reductase (fno).